A 282-amino-acid polypeptide reads, in one-letter code: Glycine betaine transport system permease protein OpuAB (282 aa).

Residues Met-1–Asp-18 are Extracellular-facing. A helical transmembrane segment spans residues Trp-19 to Val-39. The Cytoplasmic portion of the chain corresponds to Asn-40–Thr-44. Residues Gly-45–Ile-65 traverse the membrane as a helical segment. Over Ser-66 to Gly-69 the chain is Extracellular. Residues Ile-70–Met-90 traverse the membrane as a helical segment. Positions Met-90–Thr-269 constitute an ABC transmembrane type-1 domain. Residues Leu-91–Thr-93 lie on the Cytoplasmic side of the membrane. A helical membrane pass occupies residues Leu-94 to Trp-114. Residues Ala-115–Ala-137 lie on the Extracellular side of the membrane. The chain crosses the membrane as a helical span at residues Phe-138–Ala-158. Residues Ser-159–Gln-215 lie on the Cytoplasmic side of the membrane. A helical transmembrane segment spans residues Ser-216–Gly-236. The Extracellular segment spans residues Ser-237–Ala-242. A helical transmembrane segment spans residues Val-243–Ile-263. Residues Thr-264 to Ala-282 lie on the Cytoplasmic side of the membrane.

The protein belongs to the binding-protein-dependent transport system permease family. CysTW subfamily. In terms of assembly, the complex is composed of two ATP-binding proteins (OpuAA), two transmembrane proteins (OpuAB) and a solute-binding protein (OpuAC).

It localises to the cell membrane. In terms of biological role, involved in a multicomponent binding-protein-dependent transport system for glycine betaine; probably responsible for the translocation of the substrate across the membrane. The sequence is that of Glycine betaine transport system permease protein OpuAB (opuAB) from Bacillus subtilis (strain 168).